Here is a 203-residue protein sequence, read N- to C-terminus: GTP cyclohydrolase-2 (203 aa).

A GTP-binding site is contributed by 49–53; sequence RIHSE. Positions 54, 65, and 67 each coordinate Zn(2+). Residues Gln-70, 92–94, and Thr-114 each bind GTP; that span reads EGR. Residue Asp-126 is the Proton acceptor of the active site. Arg-128 (nucleophile) is an active-site residue. GTP-binding residues include Thr-149 and Lys-154.

Belongs to the GTP cyclohydrolase II family. The cofactor is Zn(2+).

The catalysed reaction is GTP + 4 H2O = 2,5-diamino-6-hydroxy-4-(5-phosphoribosylamino)-pyrimidine + formate + 2 phosphate + 3 H(+). Its pathway is cofactor biosynthesis; riboflavin biosynthesis; 5-amino-6-(D-ribitylamino)uracil from GTP: step 1/4. In terms of biological role, catalyzes the conversion of GTP to 2,5-diamino-6-ribosylamino-4(3H)-pyrimidinone 5'-phosphate (DARP), formate and pyrophosphate. The polypeptide is GTP cyclohydrolase-2 (Shewanella oneidensis (strain ATCC 700550 / JCM 31522 / CIP 106686 / LMG 19005 / NCIMB 14063 / MR-1)).